A 98-amino-acid polypeptide reads, in one-letter code: Integration host factor subunit alpha (98 aa).

The disordered stretch occupies residues 51-71; the sequence is NFDLRDKNERPGRNPKTGEDI. Basic and acidic residues predominate over residues 53–69; the sequence is DLRDKNERPGRNPKTGE.

Belongs to the bacterial histone-like protein family. Heterodimer of an alpha and a beta chain.

Its function is as follows. This protein is one of the two subunits of integration host factor, a specific DNA-binding protein that functions in genetic recombination as well as in transcriptional and translational control. This Vibrio cholerae serotype O1 (strain ATCC 39541 / Classical Ogawa 395 / O395) protein is Integration host factor subunit alpha.